A 338-amino-acid polypeptide reads, in one-letter code: Protein REG2 (338 aa).

The interval 1–21 (MTLSNCDSLDNLFQDPPEEEE) is disordered.

In terms of biological role, regulatory subunit, binds to type-1 protein phosphatase. Functions with HEX2/REG1 and SNF1 protein kinase to regulate growth. Might regulate SNF1 directly or indirectly. This is Protein REG2 (REG2) from Saccharomyces cerevisiae (strain ATCC 204508 / S288c) (Baker's yeast).